Reading from the N-terminus, the 345-residue chain is NADPH-dependent curcumin reductase (345 aa).

Residues 1–10 are compositionally biased toward basic residues; that stretch reads MGQQKQRNRR. The segment at 1-24 is disordered; the sequence is MGQQKQRNRRWVLASRPHGAPVPE. NADP(+) contacts are provided by K186, N225, and N333.

As to quaternary structure, homodimer.

It carries out the reaction tetrahydrocurcumin + 2 NADP(+) = curcumin + 2 NADPH + 2 H(+). The enzyme catalyses tetrahydrocurcumin + NADP(+) = dihydrocurcumin + NADPH + H(+). The catalysed reaction is dihydrocurcumin + NADP(+) = curcumin + NADPH + H(+). Inhibited by thiol-specific reagents (p-chloromercuribenzoate and 5,5'-dithio-bis-2-nitrobenzoate). Catalyzes the metal-independent reduction of curcumin to dihydrocurcumin (DHC) as an intermediate product, followed by further reduction to tetrahydrocurcumin (THC) as an end product. It also acts on 3-octene-2-one, 3-hepten-2-one, resveratrol, and trans-2-octenal. The sequence is that of NADPH-dependent curcumin reductase from Escherichia coli (strain K12).